We begin with the raw amino-acid sequence, 256 residues long: Thiazole synthase (256 aa).

The active-site Schiff-base intermediate with DXP is K97. Residues G158, 184-185, and 206-207 contribute to the 1-deoxy-D-xylulose 5-phosphate site; these read AG and NT.

It belongs to the ThiG family. In terms of assembly, homotetramer. Forms heterodimers with either ThiH or ThiS.

The protein localises to the cytoplasm. The catalysed reaction is [ThiS sulfur-carrier protein]-C-terminal-Gly-aminoethanethioate + 2-iminoacetate + 1-deoxy-D-xylulose 5-phosphate = [ThiS sulfur-carrier protein]-C-terminal Gly-Gly + 2-[(2R,5Z)-2-carboxy-4-methylthiazol-5(2H)-ylidene]ethyl phosphate + 2 H2O + H(+). It participates in cofactor biosynthesis; thiamine diphosphate biosynthesis. In terms of biological role, catalyzes the rearrangement of 1-deoxy-D-xylulose 5-phosphate (DXP) to produce the thiazole phosphate moiety of thiamine. Sulfur is provided by the thiocarboxylate moiety of the carrier protein ThiS. In vitro, sulfur can be provided by H(2)S. This chain is Thiazole synthase, found in Flavobacterium psychrophilum (strain ATCC 49511 / DSM 21280 / CIP 103535 / JIP02/86).